The primary structure comprises 409 residues: Indian hedgehog protein (409 aa).

The N-terminal stretch at 1–23 (MQLPKVVLLLCAAALLLSGAVRG) is a signal peptide. The N-palmitoyl cysteine moiety is linked to residue Cys24. The Ca(2+) site is built by Glu89, Glu90, Asp95, Thr125, Glu126, Asp129, and Asp131. The Zn(2+) site is built by His140, Asp147, and His182. A lipid anchor (Cholesterol glycine ester) is attached at Gly197.

It belongs to the hedgehog family. In terms of assembly, multimer. As to quaternary structure, interacts with BOC and CDON. Interacts with PTCH1. Interacts with glypican GPC3. Cholesterylation is required for N-product targeting to lipid rafts and multimerization. In terms of processing, the C-terminal domain displays an autoproteolysis activity and a cholesterol transferase activity. Both activities result in the cleavage of the full-length protein and covalent attachment of a cholesterol moiety to the C-terminal of the newly generated N-product. The N-product is the active species in both local and long-range signaling, whereas the C-product is degraded in the endoplasmic reticulum. Post-translationally, N-palmitoylation by HHAT of N-product is required for indian hedgehog protein N-product multimerization and full activity. Expressed in the marginal zone at early gastrulation. At stage 14, expression begins in the neural plate with expression becoming more prominent in the anterodorsal area at neural tube closure. At this stage, also expressed diffusely in the somitic and pre-somitic mesoderm. By the early tadpole (stages 28-30), expression is widespread throughout anterior structures with highest levels in the otic vesicle, the eye, and the branchial arches.

The protein localises to the cell membrane. Its subcellular location is the endoplasmic reticulum membrane. It is found in the golgi apparatus membrane. The protein resides in the secreted. It catalyses the reaction glycyl-L-cysteinyl-[protein] + cholesterol + H(+) = [protein]-C-terminal glycyl cholesterol ester + N-terminal L-cysteinyl-[protein]. Signal involved in the early induction and patterning of anterodorsal ectoderm, nervous system and somites. Induces ectopic cement gland formation in embryos. It is involved in the regulation of endochondral skeleton formation, and the development of retinal pigment epithelium (RPE), photoreceptors and periocular tissues. Functionally, the C-terminal part of the indian hedgehog protein precursor displays an autoproteolysis and a cholesterol transferase activity. Both activities result in the cleavage of the full-length protein into two parts followed by the covalent attachment of a cholesterol moiety to the C-terminal of the newly generated N-product. Both activities occur in the endoplasmic reticulum. Its function is as follows. The dually lipidated indian hedgehog protein N-product is a morphogen which is essential for a variety of patterning events during development. Binds to the patched (PTCH1) receptor, which functions in association with smoothened (SMO), to activate the transcription of target genes. Signal involved in the early induction and patterning of anterodorsal ectoderm, nervous system and somites. Induces ectopic cement gland formation in embryos. The protein is Indian hedgehog protein of Xenopus laevis (African clawed frog).